The primary structure comprises 434 residues: Septin-6 (434 aa).

At A2 the chain carries N-acetylalanine. S27 carries the phosphoserine modification. The region spanning 39-305 is the Septin-type G domain; that stretch reads QGFCFNILCV…ELYRRCKLEE (267 aa). The tract at residues 49–56 is G1 motif; that stretch reads GETGLGKS. Residues 49 to 56, G104, 185 to 193, G239, and R254 contribute to the GTP site; these read GETGLGKS and KADAISKSE. The G3 motif stretch occupies residues 101–104; it reads STVG. Residues 184 to 187 are G4 motif; it reads AKAD. Positions 321 to 409 form a coiled coil; sequence QETYEAKRNE…KTAAELLQSQ (89 aa). Position 367 is an N6-acetyllysine (K367). The tract at residues 405–434 is disordered; the sequence is LLQSQGSQAGGSQTLKRDKEKKNNPWLCTE. Positions 407–417 are enriched in low complexity; the sequence is QSQGSQAGGSQ. A Phosphoserine modification is found at S416. T418 is modified (phosphothreonine).

This sequence belongs to the TRAFAC class TrmE-Era-EngA-EngB-Septin-like GTPase superfamily. Septin GTPase family. Septins polymerize into heterooligomeric protein complexes that form filaments, and associate with cellular membranes, actin filaments and microtubules. GTPase activity is required for filament formation. Filaments are assembled from asymmetrical heterotrimers, composed of SEPTIN2, SEPTIN6 and SEPTIN7 that associate head-to-head to form a hexameric unit. Within the trimer, directly interacts with SEPTIN2 and SEPTIN7. Also interacts with SEPTIN9 and SEPTIN12. Interaction with SEPTIN12 alters filament structure. Component of a septin core octameric complex consisting of SEPTIN12, SEPTIN7, SEPTIN6 and SEPTIN2 or SEPTIN4 in the order 12-7-6-2-2-6-7-12 or 12-7-6-4-4-6-7-12 and located in the sperm annulus. Interacts with SOCS7. Interacts with HNRNPA1. In terms of assembly, (Microbial infection) Interacts with HCV NS5B. As to expression, widely expressed.

Its subcellular location is the cytoplasm. The protein localises to the cytoskeleton. It localises to the spindle. The protein resides in the chromosome. It is found in the centromere. Its subcellular location is the kinetochore. The protein localises to the cleavage furrow. It localises to the midbody. The protein resides in the cell projection. It is found in the cilium. Its subcellular location is the flagellum. Functionally, filament-forming cytoskeletal GTPase. Required for normal organization of the actin cytoskeleton. Involved in cytokinesis. May play a role in HCV RNA replication. Forms a filamentous structure with SEPTIN12, SEPTIN6, SEPTIN2 and probably SEPTIN4 at the sperm annulus which is required for the structural integrity and motility of the sperm tail during postmeiotic differentiation. This is Septin-6 from Homo sapiens (Human).